A 151-amino-acid chain; its full sequence is RNA polymerase-binding transcription factor DksA (151 aa).

Residues C114, C117, C135, and C138 each coordinate Zn(2+). The dksA C4-type zinc-finger motif lies at 114 to 138 (CNSCSVEIGIRRLEARPTADLCIDC).

This sequence belongs to the DksA family. As to quaternary structure, interacts directly with the RNA polymerase.

It is found in the cytoplasm. Transcription factor that acts by binding directly to the RNA polymerase (RNAP). Required for negative regulation of rRNA expression and positive regulation of several amino acid biosynthesis promoters. Also required for regulation of fis expression. In Buchnera aphidicola subsp. Acyrthosiphon pisum (strain APS) (Acyrthosiphon pisum symbiotic bacterium), this protein is RNA polymerase-binding transcription factor DksA.